The following is a 146-amino-acid chain: Urease accessory protein UreE 1 (146 aa).

This sequence belongs to the UreE family.

It localises to the cytoplasm. Functionally, involved in urease metallocenter assembly. Binds nickel. Probably functions as a nickel donor during metallocenter assembly. This is Urease accessory protein UreE 1 from Pseudomonas syringae pv. tomato (strain ATCC BAA-871 / DC3000).